The sequence spans 320 residues: Ferrochelatase (320 aa).

Fe cation contacts are provided by His194 and Glu275.

It belongs to the ferrochelatase family.

The protein resides in the cytoplasm. It catalyses the reaction heme b + 2 H(+) = protoporphyrin IX + Fe(2+). It functions in the pathway porphyrin-containing compound metabolism; protoheme biosynthesis; protoheme from protoporphyrin-IX: step 1/1. Functionally, catalyzes the ferrous insertion into protoporphyrin IX. This chain is Ferrochelatase, found in Xylella fastidiosa (strain M12).